The chain runs to 372 residues: L-selectin (372 aa).

A signal peptide spans methionine 1–cysteine 28. A propeptide spanning residues aspartate 29–cysteine 38 is cleaved from the precursor. At tryptophan 39–asparagine 332 the chain is on the extracellular side. Residues arginine 55 to cysteine 155 form the C-type lectin domain. 10 disulfide bridges follow: cysteine 57-cysteine 155, cysteine 128-cysteine 147, cysteine 128-cysteine 160, cysteine 160-cysteine 171, cysteine 165-cysteine 180, cysteine 182-cysteine 191, cysteine 197-cysteine 241, cysteine 227-cysteine 254, cysteine 259-cysteine 303, and cysteine 289-cysteine 316. Asparagine 60 and asparagine 104 each carry an N-linked (GlcNAc...) asparagine glycan. Ca(2+)-binding residues include glutamate 118, asparagine 120, glutamate 126, asparagine 143, and aspartate 144. Residues tyrosine 156–glutamine 192 form the EGF-like domain. A glycan (N-linked (GlcNAc...) asparagine) is linked at asparagine 177. Sushi domains lie at isoleucine 195–valine 256 and isoleucine 257–lysine 318. Asparagine 216, asparagine 226, asparagine 232, asparagine 246, and asparagine 271 each carry an N-linked (GlcNAc...) asparagine glycan. A helical membrane pass occupies residues proline 333–alanine 355. Topologically, residues arginine 356 to tyrosine 372 are cytoplasmic.

Belongs to the selectin/LECAM family. Interaction with SELPLG/PSGL1 and PODXL2 is required for promoting recruitment and rolling of leukocytes. This interaction is dependent on the sialyl Lewis X glycan modification of SELPLG and PODXL2, and tyrosine sulfation modifications of SELPLG. Sulfation on 'Tyr-51' of SELPLG is important for L-selectin binding. N-glycosylated.

It is found in the cell membrane. Its function is as follows. Calcium-dependent lectin that mediates cell adhesion by binding to glycoproteins on neighboring cells. Mediates the adherence of lymphocytes to endothelial cells of high endothelial venules in peripheral lymph nodes. Promotes initial tethering and rolling of leukocytes in endothelia. This chain is L-selectin (SELL), found in Pongo pygmaeus (Bornean orangutan).